The following is a 791-amino-acid chain: Endonuclease MutS2 (791 aa).

337-344 (GPNTGGKT) contacts ATP. The interval 689–715 (AAQASQKKPEKSVRSSRGLRSSRASSE) is disordered. The span at 703-713 (SSRGLRSSRAS) shows a compositional bias: low complexity. The 76-residue stretch at 716–791 (LDLRGQRYEE…GTGATIVNLQ (76 aa)) folds into the Smr domain.

This sequence belongs to the DNA mismatch repair MutS family. MutS2 subfamily. As to quaternary structure, homodimer. Binds to stalled ribosomes, contacting rRNA.

In terms of biological role, endonuclease that is involved in the suppression of homologous recombination and thus may have a key role in the control of bacterial genetic diversity. Acts as a ribosome collision sensor, splitting the ribosome into its 2 subunits. Detects stalled/collided 70S ribosomes which it binds and splits by an ATP-hydrolysis driven conformational change. Acts upstream of the ribosome quality control system (RQC), a ribosome-associated complex that mediates the extraction of incompletely synthesized nascent chains from stalled ribosomes and their subsequent degradation. Probably generates substrates for RQC. This chain is Endonuclease MutS2, found in Lactobacillus gasseri (strain ATCC 33323 / DSM 20243 / BCRC 14619 / CIP 102991 / JCM 1131 / KCTC 3163 / NCIMB 11718 / NCTC 13722 / AM63).